We begin with the raw amino-acid sequence, 1455 residues long: DNA polymerase II large subunit (1455 aa).

Positions 1409–1440 (GLLENLSNGSKKTEKAEKAEKPRKKSDEKPKK) are disordered. Residues 1419-1438 (KKTEKAEKAEKPRKKSDEKP) are compositionally biased toward basic and acidic residues.

It belongs to the archaeal DNA polymerase II family. As to quaternary structure, heterodimer of a large subunit and a small subunit. Post-translationally, this protein undergoes a protein self splicing that involves a post-translational excision of the intervening region (intein) followed by peptide ligation.

It carries out the reaction DNA(n) + a 2'-deoxyribonucleoside 5'-triphosphate = DNA(n+1) + diphosphate. The catalysed reaction is Exonucleolytic cleavage in the 3'- to 5'-direction to yield nucleoside 5'-phosphates.. In terms of biological role, possesses two activities: a DNA synthesis (polymerase) and an exonucleolytic activity that degrades single-stranded DNA in the 3'- to 5'-direction. Has a template-primer preference which is characteristic of a replicative DNA polymerase. This is DNA polymerase II large subunit (polC) from Pyrococcus abyssi (strain GE5 / Orsay).